The sequence spans 778 residues: Semaphorin-3ab (778 aa).

The N-terminal stretch at 1–17 (MDYLWWIVLLIWTLIAP) is a signal peptide. The Sema domain occupies 32–515 (RLKPSYKEML…SAIGVSQMPL (484 aa)). Asn-54 is a glycosylation site (N-linked (GlcNAc...) asparagine). Residues Cys-105 and Cys-116 are joined by a disulfide bond. Residue Asn-127 is glycosylated (N-linked (GlcNAc...) asparagine). 4 cysteine pairs are disulfide-bonded: Cys-134-Cys-143, Cys-270-Cys-382, Cys-294-Cys-342, and Cys-518-Cys-536. An Ig-like C2-type domain is found at 579 to 668 (GEAGLLDKTV…FIQTLLRLTL (90 aa)). N-linked (GlcNAc...) asparagine glycosylation occurs at Asn-593. A disulfide bridge connects residues Cys-652 and Cys-716. The segment at 727 to 778 (RRQKANLLHASQSHTSQILHSSQSHAKWKLLQENKKGRNRRTHEMQRAPRSV) is disordered. The span at 735-751 (HASQSHTSQILHSSQSH) shows a compositional bias: polar residues. Basic and acidic residues predominate over residues 756 to 778 (LLQENKKGRNRRTHEMQRAPRSV).

This sequence belongs to the semaphorin family. In terms of tissue distribution, expressed in rhombomeres three and five, and in the posterior half of newly formed somites which is avoided by ventrally extending motor axons.

The protein resides in the secreted. Its function is as follows. Might normally influence the midsegmental pathway choice of the ventrally extending motor axons by contributing to a repulsive domain in the posterior somite. This Danio rerio (Zebrafish) protein is Semaphorin-3ab (sema3ab).